Reading from the N-terminus, the 767-residue chain is Polyketide biosynthesis protein PksE (767 aa).

Positions 1–312 are acyl transferase; sequence MITYVFPGQG…QRNVQAGITA (312 aa). Active-site residues include serine 87 and histidine 193.

The protein in the N-terminal section; belongs to the FabD family.

Its subcellular location is the cytoplasm. It catalyses the reaction holo-[ACP] + malonyl-CoA = malonyl-[ACP] + CoA. It functions in the pathway antibiotic biosynthesis; bacillaene biosynthesis. Functionally, probably involved in some intermediate steps for the synthesis of the antibiotic polyketide bacillaene which is involved in secondary metabolism. Probably has an acyl transferase activity and could also have a flavin mononucleotide-dependent oxidoreductase activity. This is Polyketide biosynthesis protein PksE (pksE) from Bacillus subtilis (strain 168).